Reading from the N-terminus, the 226-residue chain is PKHD-type hydroxylase AZC_3753 (226 aa).

Positions 78–178 (RILPPMFNRY…RVASFFWTQS (101 aa)) constitute a Fe2OG dioxygenase domain. Positions 96, 98, and 159 each coordinate Fe cation. Residue arginine 169 coordinates 2-oxoglutarate.

Requires Fe(2+) as cofactor. L-ascorbate is required as a cofactor.

This is PKHD-type hydroxylase AZC_3753 from Azorhizobium caulinodans (strain ATCC 43989 / DSM 5975 / JCM 20966 / LMG 6465 / NBRC 14845 / NCIMB 13405 / ORS 571).